We begin with the raw amino-acid sequence, 39 residues long: Decorsin (39 aa).

Positions 27–38 (CRFPRGDADPYC) are high affinity binding domain. A Cell attachment site motif is present at residues 31 to 33 (RGD).

The protein belongs to the ornatin family.

It is found in the secreted. Its function is as follows. Inhibits fibrinogen interaction with platelet receptors expressed on glycoprotein IIb-IIIa complex. May prevent blood from clotting during either feeding and/or storage of ingested blood. The sequence is that of Decorsin from Macrobdella decora (North American leech).